We begin with the raw amino-acid sequence, 304 residues long: MPRQAASRLVVGEGEGPPGASGPAATMLRSLLLHSLRLCAQTASCLVLFPRFLGTAFMLWLLDFLCIRKHFLRRRHPDHPEPEVELNSEGEEMPPDDPPICVSDDNRLCTLASLKAVWHGQKLDFFKQAHEGGPAPNSEVVRPDGFQSQRILDYAQGTRPLVLNFGSCTUPPFMARMSAFQRLVTKYQRDVDFLIIYIEEAHPSDGWVTTDSPYVIPQHRSLEDRVSAARVLQQGAPGCALVLDTMANSSSSAYGAYFERLYVIQSGTIMYQGGRGPDGYQVSELRTWLERYDEQLHGTRPRRL.

Residues 1 to 22 (MPRQAASRLVVGEGEGPPGASG) are disordered. The Cytoplasmic portion of the chain corresponds to 1-42 (MPRQAASRLVVGEGEGPPGASGPAATMLRSLLLHSLRLCAQT). A helical; Signal-anchor for type II membrane protein membrane pass occupies residues 43-62 (ASCLVLFPRFLGTAFMLWLL). At 63–304 (DFLCIRKHFL…QLHGTRPRRL (242 aa)) the chain is on the extracellular side. The active site involves U170. Residue U170 is a non-standard amino acid, selenocysteine.

It belongs to the iodothyronine deiodinase family. As to quaternary structure, monomer. Homodimer. May undergo minor heretodimerization with DIO1 and DIO2. In terms of tissue distribution, neonatal skin, placenta, skeletal muscle and cerebral cortex.

The protein resides in the cell membrane. It localises to the endosome membrane. It catalyses the reaction 3,3',5'-triiodo-L-thyronine + iodide + A + H(+) = L-thyroxine + AH2. It carries out the reaction 3,3'-diiodo-L-thyronine + iodide + A + H(+) = 3,3',5-triiodo-L-thyronine + AH2. The catalysed reaction is 3-iodo-L-thyronine + iodide + A + H(+) = 3,5-diiodo-L-thyronine + AH2. The enzyme catalyses L-thyronine + iodide + A + H(+) = 3-iodo-L-thyronine + AH2. It catalyses the reaction 3',5'-diiodo-L-thyronine + iodide + A + H(+) = 3,3',5'-triiodo-L-thyronine + AH2. It carries out the reaction 3'-iodo-L-thyronine + iodide + A + H(+) = 3,3'-diiodo-L-thyronine + AH2. The catalysed reaction is 3,3',5'-triiodothyronamine + iodide + A + H(+) = 3,3',5,5'-tetraiodothyronamine + AH2. The enzyme catalyses 3',5'-diiodothyronamine + iodide + A + H(+) = 3,3',5'-triiodothyronamine + AH2. It catalyses the reaction 3,3'-diiodothyronamine + iodide + A + H(+) = 3,3',5-triiodothyronamine + AH2. It carries out the reaction 3-iodothyronamine + iodide + A + H(+) = 3,5-diiodothyronamine + AH2. The catalysed reaction is 3'-iodothyronamine + iodide + A + H(+) = 3,3'-diiodothyronamine + AH2. The enzyme catalyses thyronamine + iodide + A + H(+) = 3-iodothyronamine + AH2. Functionally, plays a crucial role in the metabolism of thyroid hormones (TH) and has specific roles in TH activation and inactivation by deiodination. Catalyzes the deiodination of L-thyroxine (T4) to 3,3',5'-triiodothyronine (rT3), 3,5-diiodothyronine (3,5-T2) to 3-monoiodothyronine (3-T1), rT3 to 3',5'-diiodothyronine (3',5'-T2) and 3,3'-diiodothyronine (3,3'-T2) to 3'-monoiodothyronine (3'-T1) via inner-ring deiodination (IRD). Catalyzes the deiodination of 3,5,3'-triiodothyronine (T3) to 3,3'-diiodothyronine (3,3'-T2) via IRD. Catalyzes the deiodination of 3-T1 to L-thyronine (T0) via outer-ring deiodination (ORD). Catalyzes the tyrosyl ring deiodinations of T4AM (3,3',5,5'-tetraiodothyronamine), rT3AM (3,3',5'-triiodothyronamine), T3AM (3,5,3'-triiodothyronamine), 3,5-T2AM (3,5-diiodothyronamine), 3,3'-T2AM (3,3'-diiodothyronamine) and 3-T1AM (3-iodothyronamine). This chain is Thyroxine 5-deiodinase (Dio3), found in Rattus norvegicus (Rat).